The chain runs to 111 residues: uncharacterized protein (111 aa).

Residues methionine 1–alanine 18 form the signal peptide.

This is an uncharacterized protein from Acidianus convivator (ATV).